A 488-amino-acid polypeptide reads, in one-letter code: ATP synthase subunit beta (488 aa).

164–171 provides a ligand contact to ATP; it reads GGAGVGKT.

The protein belongs to the ATPase alpha/beta chains family. F-type ATPases have 2 components, CF(1) - the catalytic core - and CF(0) - the membrane proton channel. CF(1) has five subunits: alpha(3), beta(3), gamma(1), delta(1), epsilon(1). CF(0) has four main subunits: a(1), b(1), b'(1) and c(9-12).

It localises to the cellular thylakoid membrane. It carries out the reaction ATP + H2O + 4 H(+)(in) = ADP + phosphate + 5 H(+)(out). In terms of biological role, produces ATP from ADP in the presence of a proton gradient across the membrane. The catalytic sites are hosted primarily by the beta subunits. In Prochlorococcus marinus (strain MIT 9313), this protein is ATP synthase subunit beta.